Reading from the N-terminus, the 328-residue chain is tRNA uridine(34) hydroxylase (328 aa).

A Rhodanese domain is found at 130-224 (LDEDTIVLDT…YGKDPEVQGE (95 aa)). Residue C184 is the Cysteine persulfide intermediate of the active site.

It belongs to the TrhO family.

The enzyme catalyses uridine(34) in tRNA + AH2 + O2 = 5-hydroxyuridine(34) in tRNA + A + H2O. Functionally, catalyzes oxygen-dependent 5-hydroxyuridine (ho5U) modification at position 34 in tRNAs. The chain is tRNA uridine(34) hydroxylase from Streptococcus uberis (strain ATCC BAA-854 / 0140J).